A 146-amino-acid polypeptide reads, in one-letter code: Large ribosomal subunit protein uL15 (146 aa).

Residues 1 to 51 are disordered; the sequence is MKLHELQPAAGSRKVRNRVGRGTSSGNGKTAGRGQKGQKARSGGGVRLGFE. Gly residues-rich tracts occupy residues 23-35 and 42-51; these read TSSGNGKTAGRGQ and SGGGVRLGFE.

Belongs to the universal ribosomal protein uL15 family. In terms of assembly, part of the 50S ribosomal subunit.

Binds to the 23S rRNA. The sequence is that of Large ribosomal subunit protein uL15 from Streptococcus gordonii (strain Challis / ATCC 35105 / BCRC 15272 / CH1 / DL1 / V288).